A 134-amino-acid chain; its full sequence is DNA-binding protein inhibitor ID-2 (134 aa).

2 positions are modified to phosphoserine: S14 and S25. The region spanning 23–75 (SRSKTPVDDPMSLLYNMNDCYSKLKELVPSIPQNKKVSKMEILQHVIDYILDL) is the bHLH domain. Residues 106–115 (LNTDISILSL) carry the Nuclear export signal motif.

Interacts with GATA4 and NKX2-5. Interacts with NR0B2. Interacts with CLOCK and BMAL1. Interacts with IFI204. Interacts with NEDD9/HEF1. Interacts with ASB4; this interaction promotes ID2 proteasomal degradation. In terms of processing, ubiquitinated in a ASB4-depedent manner, leading to proteasomal degradation. Phosphorylated in vitro by CDK1, PKA and PKC. Highly expressed in early fetal tissues, including those of the central nervous system.

The protein localises to the cytoplasm. It is found in the nucleus. In terms of biological role, transcriptional regulator (lacking a basic DNA binding domain) which negatively regulates the basic helix-loop-helix (bHLH) transcription factors by forming heterodimers and inhibiting their DNA binding and transcriptional activity. Implicated in regulating a variety of cellular processes, including cellular growth, senescence, differentiation, apoptosis, angiogenesis, and neoplastic transformation. Inhibits skeletal muscle and cardiac myocyte differentiation. Regulates the circadian clock by repressing the transcriptional activator activity of the CLOCK-BMAL1 heterodimer. Restricts the CLOCK and BMAL1 localization to the cytoplasm. Plays a role in both the input and output pathways of the circadian clock: in the input component, is involved in modulating the magnitude of photic entrainment and in the output component, contributes to the regulation of a variety of liver clock-controlled genes involved in lipid metabolism. The chain is DNA-binding protein inhibitor ID-2 (ID2) from Homo sapiens (Human).